Here is a 248-residue protein sequence, read N- to C-terminus: tRNA (guanine-N(1)-)-methyltransferase (248 aa).

Residues Gly-113 and 133–138 each bind S-adenosyl-L-methionine; that span reads VGDYVL.

It belongs to the RNA methyltransferase TrmD family. In terms of assembly, homodimer.

Its subcellular location is the cytoplasm. The catalysed reaction is guanosine(37) in tRNA + S-adenosyl-L-methionine = N(1)-methylguanosine(37) in tRNA + S-adenosyl-L-homocysteine + H(+). Its function is as follows. Specifically methylates guanosine-37 in various tRNAs. This chain is tRNA (guanine-N(1)-)-methyltransferase, found in Shewanella sp. (strain W3-18-1).